The primary structure comprises 387 residues: Alanine racemase (387 aa).

The active-site Proton acceptor; specific for D-alanine is Lys-38. Lys-38 is subject to N6-(pyridoxal phosphate)lysine. Arg-136 provides a ligand contact to substrate. The active-site Proton acceptor; specific for L-alanine is Tyr-267. Position 315 (Met-315) interacts with substrate.

It belongs to the alanine racemase family. It depends on pyridoxal 5'-phosphate as a cofactor.

The enzyme catalyses L-alanine = D-alanine. Its pathway is amino-acid biosynthesis; D-alanine biosynthesis; D-alanine from L-alanine: step 1/1. In terms of biological role, catalyzes the interconversion of L-alanine and D-alanine. May also act on other amino acids. The polypeptide is Alanine racemase (alr) (Clostridium novyi (strain NT)).